Here is a 390-residue protein sequence, read N- to C-terminus: Coenzyme A biosynthesis bifunctional protein CoaBC (390 aa).

Positions 1-188 (MDKNKHILIG…NQKDYLKNKK (188 aa)) are phosphopantothenoylcysteine decarboxylase. The Proton donor role is filled by Cys156. Residues 189-390 (ILITASRTEE…VAKEILKILY (202 aa)) are phosphopantothenate--cysteine ligase. Residues Asp277, Lys287, 304–307 (PDII), Phe323, Lys338, and Lys342 contribute to the CTP site.

In the N-terminal section; belongs to the HFCD (homo-oligomeric flavin containing Cys decarboxylase) superfamily. The protein in the C-terminal section; belongs to the PPC synthetase family. Mg(2+) is required as a cofactor. The cofactor is FMN.

It carries out the reaction N-[(R)-4-phosphopantothenoyl]-L-cysteine + H(+) = (R)-4'-phosphopantetheine + CO2. It catalyses the reaction (R)-4'-phosphopantothenate + L-cysteine + CTP = N-[(R)-4-phosphopantothenoyl]-L-cysteine + CMP + diphosphate + H(+). Its pathway is cofactor biosynthesis; coenzyme A biosynthesis; CoA from (R)-pantothenate: step 2/5. It participates in cofactor biosynthesis; coenzyme A biosynthesis; CoA from (R)-pantothenate: step 3/5. Catalyzes two sequential steps in the biosynthesis of coenzyme A. In the first step cysteine is conjugated to 4'-phosphopantothenate to form 4-phosphopantothenoylcysteine. In the second step the latter compound is decarboxylated to form 4'-phosphopantotheine. This Borreliella burgdorferi (strain ATCC 35210 / DSM 4680 / CIP 102532 / B31) (Borrelia burgdorferi) protein is Coenzyme A biosynthesis bifunctional protein CoaBC.